The chain runs to 448 residues: MTTPTAIRRLDAADPDFARHLDHLLSWESVSDDSVNQRVLDIIKAVRERGDEALVEFTQKFDGLQVASMADLILPRERLELALTRITPVQREALEKAAERVRSYHEKQKQDSWSYTEADGTVLGQKVTPLDRAGLYVPGGKASYPSSVLMNAIPAKVAGVTEVVMVVPTPRGEINELVLAAACIAGVDRVFTIGGAQAVAALAYGTESVPKVDKVVGPGNIYVATAKRHVFGQVGIDMIAGPSEILVVCDGQTDPDWIAMDLFSQAEHDEDAQAILVSPDADFLDKVAASITRLLPTMERAAIVETSINGRGALIKVADMAQAIEVANRIAPEHLELSVADPEAWLPQIRHAGAIFMGRHTSEALGDYCAGPNHVLPTSGTARFSSPLGVYDFQKRSSIIYCSPQGASELGKTASVLARGESLSGHARSAEYRITDPDWKAGNTEDGK.

NAD(+) contacts are provided by Tyr-136, Gln-197, and Asn-220. Substrate-binding residues include Ser-243, Gln-265, and His-268. Residues Gln-265 and His-268 each contribute to the Zn(2+) site. Active-site proton acceptor residues include Glu-333 and His-334. Substrate-binding residues include His-334, Asp-367, Glu-421, and His-426. Residue Asp-367 coordinates Zn(2+). A Zn(2+)-binding site is contributed by His-426.

Belongs to the histidinol dehydrogenase family. Zn(2+) is required as a cofactor.

It catalyses the reaction L-histidinol + 2 NAD(+) + H2O = L-histidine + 2 NADH + 3 H(+). It participates in amino-acid biosynthesis; L-histidine biosynthesis; L-histidine from 5-phospho-alpha-D-ribose 1-diphosphate: step 9/9. In terms of biological role, catalyzes the sequential NAD-dependent oxidations of L-histidinol to L-histidinaldehyde and then to L-histidine. In Pseudomonas savastanoi pv. phaseolicola (strain 1448A / Race 6) (Pseudomonas syringae pv. phaseolicola (strain 1448A / Race 6)), this protein is Histidinol dehydrogenase.